The sequence spans 433 residues: Serine--tRNA ligase (433 aa).

235–237 (TSE) is an L-serine binding site. 266–268 (RSE) contributes to the ATP binding site. Residue Glu289 participates in L-serine binding. 353–356 (EISS) is an ATP binding site. An L-serine-binding site is contributed by Ser388.

Belongs to the class-II aminoacyl-tRNA synthetase family. Type-1 seryl-tRNA synthetase subfamily. In terms of assembly, homodimer. The tRNA molecule binds across the dimer.

The protein resides in the cytoplasm. The catalysed reaction is tRNA(Ser) + L-serine + ATP = L-seryl-tRNA(Ser) + AMP + diphosphate + H(+). It catalyses the reaction tRNA(Sec) + L-serine + ATP = L-seryl-tRNA(Sec) + AMP + diphosphate + H(+). The protein operates within aminoacyl-tRNA biosynthesis; selenocysteinyl-tRNA(Sec) biosynthesis; L-seryl-tRNA(Sec) from L-serine and tRNA(Sec): step 1/1. Its function is as follows. Catalyzes the attachment of serine to tRNA(Ser). Is also able to aminoacylate tRNA(Sec) with serine, to form the misacylated tRNA L-seryl-tRNA(Sec), which will be further converted into selenocysteinyl-tRNA(Sec). The chain is Serine--tRNA ligase from Burkholderia lata (strain ATCC 17760 / DSM 23089 / LMG 22485 / NCIMB 9086 / R18194 / 383).